The sequence spans 389 residues: MDRRRFVILVADSVGCGALPDARAYGDEGSDTLGNTSRAVGGLSLPVLGRMGIGHLTPILGVPPEPSPLAFHGRMAERSQGKDTITGHWEMMGIVLSEPLALFPRGFPPEILDPFLRETGLPGVLGNVAASGTEIIRELGEEHQRTGMPIVYTSADSVFQIAAHEETVPLETLYAWCRVARRILDPYRVARVIARPFVGKPGEYVRTYHRKDFSIATPGRTVLEKLVDARVPVVGVGKIPDIFDRKGITDELHTAGNADGLAKTEALLDRVDHGLVFVNLVDFDMLYGHRNDPQGYARALEEMDRALPRILGKLRPGEVAALTADHGCDPTTPSTDHSREYVPLVVHAPGRGGGALGTRGSFADLGATVADFFGVRHETGRSFLGDLGP.

Residues Asp-12, Asp-284, His-289, Asp-325, His-326, and His-337 each contribute to the Mn(2+) site.

Belongs to the phosphopentomutase family. It depends on Mn(2+) as a cofactor.

It is found in the cytoplasm. It carries out the reaction 2-deoxy-alpha-D-ribose 1-phosphate = 2-deoxy-D-ribose 5-phosphate. It catalyses the reaction alpha-D-ribose 1-phosphate = D-ribose 5-phosphate. The protein operates within carbohydrate degradation; 2-deoxy-D-ribose 1-phosphate degradation; D-glyceraldehyde 3-phosphate and acetaldehyde from 2-deoxy-alpha-D-ribose 1-phosphate: step 1/2. In terms of biological role, isomerase that catalyzes the conversion of deoxy-ribose 1-phosphate (dRib-1-P) and ribose 1-phosphate (Rib-1-P) to deoxy-ribose 5-phosphate (dRib-5-P) and ribose 5-phosphate (Rib-5-P), respectively. The sequence is that of Phosphopentomutase from Anaeromyxobacter sp. (strain Fw109-5).